The primary structure comprises 569 residues: AsmA family protein YicH (569 aa).

Over 1–6 the chain is Cytoplasmic; sequence MKFIGK. A helical transmembrane segment spans residues 7–27; sequence LLLYILIALLVAIAGLYFLLQ. At 28 to 569 the chain is on the periplasmic side; sequence TRWGAEHISA…GEVTSTEPVR (542 aa).

Belongs to the AsmA family.

The protein localises to the cell inner membrane. The polypeptide is AsmA family protein YicH (yicH) (Escherichia coli (strain K12)).